Here is a 279-residue protein sequence, read N- to C-terminus: 4-diphosphocytidyl-2-C-methyl-D-erythritol kinase (279 aa).

Lys-9 is a catalytic residue. 92–102 is an ATP binding site; the sequence is PLAAGLGGGSS. The active site involves Asp-134.

Belongs to the GHMP kinase family. IspE subfamily.

It carries out the reaction 4-CDP-2-C-methyl-D-erythritol + ATP = 4-CDP-2-C-methyl-D-erythritol 2-phosphate + ADP + H(+). It participates in isoprenoid biosynthesis; isopentenyl diphosphate biosynthesis via DXP pathway; isopentenyl diphosphate from 1-deoxy-D-xylulose 5-phosphate: step 3/6. Functionally, catalyzes the phosphorylation of the position 2 hydroxy group of 4-diphosphocytidyl-2C-methyl-D-erythritol. This is 4-diphosphocytidyl-2-C-methyl-D-erythritol kinase from Syntrophus aciditrophicus (strain SB).